A 263-amino-acid polypeptide reads, in one-letter code: Phosphatidylglycerol--prolipoprotein diacylglyceryl transferase (263 aa).

The next 4 membrane-spanning stretches (helical) occupy residues 7–27 (IFSI…LGIV), 50–70 (LLTA…VLIY), 85–105 (TWKG…AVII), and 112–132 (IPIF…LFLG). A 1,2-diacyl-sn-glycero-3-phospho-(1'-sn-glycerol) is bound at residue R133. The next 3 membrane-spanning stretches (helical) occupy residues 169–189 (LYEA…LFFL), 197–217 (GTLT…VEFF), and 233–253 (MGQL…LSAL).

It belongs to the Lgt family.

Its subcellular location is the cell membrane. It carries out the reaction L-cysteinyl-[prolipoprotein] + a 1,2-diacyl-sn-glycero-3-phospho-(1'-sn-glycerol) = an S-1,2-diacyl-sn-glyceryl-L-cysteinyl-[prolipoprotein] + sn-glycerol 1-phosphate + H(+). It participates in protein modification; lipoprotein biosynthesis (diacylglyceryl transfer). Its function is as follows. Catalyzes the transfer of the diacylglyceryl group from phosphatidylglycerol to the sulfhydryl group of the N-terminal cysteine of a prolipoprotein, the first step in the formation of mature lipoproteins. This chain is Phosphatidylglycerol--prolipoprotein diacylglyceryl transferase, found in Wolbachia sp. subsp. Brugia malayi (strain TRS).